The primary structure comprises 562 residues: Protein wntless (562 aa).

The Cytoplasmic segment spans residues 1 to 13; it reads MSGTILENLSGRK. A helical membrane pass occupies residues 14-34; that stretch reads LSILVGSLLLCQVLCFLLGGL. The Lumenal segment spans residues 35-239; it reads YAPVPAGHTN…AIHQNGGFTH (205 aa). Asn58 carries an N-linked (GlcNAc...) asparagine glycan. A helical transmembrane segment spans residues 240 to 260; the sequence is VWLMLKTLLFPFVVGIMVWFW. Residues 261–270 are Cytoplasmic-facing; sequence RRVHLLQRSP. Residues 271–291 form a helical membrane-spanning segment; sequence ALLEYMLLYLGGALTFLNLPL. The Lumenal segment spans residues 292–311; it reads EYLSLTIEMPYMLLLSDIRQ. A helical transmembrane segment spans residues 312–332; it reads GIFYAMLLSFWLVFAGEHMLI. Residues 333–344 are Cytoplasmic-facing; the sequence is QDSSNKSTIRSR. Residues 345-365 form a helical membrane-spanning segment; the sequence is YWKHLSAVVVGCISLFVFDIS. At 366-386 the chain is on the lumenal side; it reads ERGVQLRNPFYSIWTTPLGAK. Residues 387–407 form a helical membrane-spanning segment; that stretch reads VAMSFILLAGVSAAVYFLFLC. Residues 408 to 441 lie on the Cytoplasmic side of the membrane; it reads YMISKVFKNIGDKRTSLPSMSQARRLHYEGLIYR. A helical membrane pass occupies residues 442 to 462; the sequence is FKFLMLATLLCAALTVTGFIM. Topologically, residues 463–482 are lumenal; that stretch reads GQMAEGQWKWNDDVEIQLTS. The chain crosses the membrane as a helical span at residues 483-503; that stretch reads AFLTGVYGMWNIYIFALLILY. Residues 504 to 562 are Cytoplasmic-facing; it reads APSHKQWPTMHHSDETTQSNENIVASAASEEIEFSNLPSDSNPSEISSLTSFTRKVAFE. Residues 538 to 562 form a disordered region; it reads SNLPSDSNPSEISSLTSFTRKVAFE. Polar residues predominate over residues 539–556; sequence NLPSDSNPSEISSLTSFT.

It belongs to the wntless family. Interacts with wg; in the Golgi. Interacts with Vps35, a component of the retromer complex; wls stability is regulated by Vps35.

It is found in the presynaptic cell membrane. Its subcellular location is the postsynaptic cell membrane. The protein resides in the cell membrane. The protein localises to the endoplasmic reticulum membrane. It localises to the endosome membrane. It is found in the golgi apparatus membrane. In terms of biological role, a segment polarity gene required for wingless (wg)-dependent patterning processes, acting in both wg-sending cells and wg-target cells. In non-neuronal cells wls directs wg secretion. The wls traffic loop encompasses the Golgi, the cell surface, an endocytic compartment and a retrograde route leading back to the Golgi, and involves clathrin-mediated endocytosis and the retromer complex (a conserved protein complex consisting of Vps35 and Vps26). In neuronal cells (the larval motorneuron NMJ), the wg signal moves across the synapse via the release of wls-containing exosome-like vesicles. Postsynaptic wls is required for the trafficking of fz2 through the fz2-interacting protein Grip. The protein is Protein wntless of Drosophila pseudoobscura pseudoobscura (Fruit fly).